The chain runs to 475 residues: tRNA-dihydrouridine(16/17) synthase [NAD(P)(+)]-like (475 aa).

Residues 23-25 (PMV) and Q79 contribute to the FMN site. The active-site Proton donor is the C108. FMN contacts are provided by residues K147, H175, 208 to 210 (NGN), and 232 to 233 (AE). Residues 343 to 388 (GPREGSKENSGGRSKRALEEEEGSMEGLSKNKLKKQLRNPHKTFDP) form a disordered region. A compositionally biased stretch (basic residues) spans 373–383 (NKLKKQLRNPH).

It belongs to the Dus family. Dus1 subfamily. The cofactor is FMN.

It is found in the cytoplasm. It localises to the nucleus. It catalyses the reaction 5,6-dihydrouridine(16) in tRNA + NADP(+) = uridine(16) in tRNA + NADPH + H(+). It carries out the reaction 5,6-dihydrouridine(16) in tRNA + NAD(+) = uridine(16) in tRNA + NADH + H(+). The catalysed reaction is 5,6-dihydrouridine(17) in tRNA + NAD(+) = uridine(17) in tRNA + NADH + H(+). The enzyme catalyses 5,6-dihydrouridine(17) in tRNA + NADP(+) = uridine(17) in tRNA + NADPH + H(+). Catalyzes the synthesis of dihydrouridine, a modified base found in the D-loop of most tRNAs. Specifically modifies U16 and U17 in cytoplasmic tRNAs. Affects the level of some mature tRNA and thereby the total cellular translation. This is tRNA-dihydrouridine(16/17) synthase [NAD(P)(+)]-like (Dus1l) from Mus musculus (Mouse).